The following is a 47-amino-acid chain: Cytochrome b559 subunit beta (47 aa).

A helical membrane pass occupies residues 22 to 38 (WLAVHTLAIPTVFFLGA). Histidine 26 contacts heme.

This sequence belongs to the PsbE/PsbF family. In terms of assembly, heterodimer of an alpha subunit and a beta subunit. PSII is composed of 1 copy each of membrane proteins PsbA, PsbB, PsbC, PsbD, PsbE, PsbF, PsbH, PsbI, PsbJ, PsbK, PsbL, PsbM, PsbT, PsbX, PsbY, PsbZ, Psb30/Ycf12, peripheral proteins PsbO, CyanoQ (PsbQ), PsbU, PsbV and a large number of cofactors. It forms dimeric complexes. It depends on heme b as a cofactor.

It localises to the cellular thylakoid membrane. In terms of biological role, this b-type cytochrome is tightly associated with the reaction center of photosystem II (PSII). PSII is a light-driven water:plastoquinone oxidoreductase that uses light energy to abstract electrons from H(2)O, generating O(2) and a proton gradient subsequently used for ATP formation. It consists of a core antenna complex that captures photons, and an electron transfer chain that converts photonic excitation into a charge separation. This chain is Cytochrome b559 subunit beta, found in Synechococcus sp. (strain JA-3-3Ab) (Cyanobacteria bacterium Yellowstone A-Prime).